A 183-amino-acid chain; its full sequence is Hypoxanthine/guanine phosphoribosyltransferase (183 aa).

The protein belongs to the purine/pyrimidine phosphoribosyltransferase family. Archaeal HPRT subfamily. Homodimer.

The protein resides in the cytoplasm. It catalyses the reaction IMP + diphosphate = hypoxanthine + 5-phospho-alpha-D-ribose 1-diphosphate. The catalysed reaction is GMP + diphosphate = guanine + 5-phospho-alpha-D-ribose 1-diphosphate. It functions in the pathway purine metabolism; IMP biosynthesis via salvage pathway; IMP from hypoxanthine: step 1/1. Catalyzes a salvage reaction resulting in the formation of IMP that is energically less costly than de novo synthesis. This is Hypoxanthine/guanine phosphoribosyltransferase from Methanocaldococcus infernus (strain DSM 11812 / JCM 15783 / ME).